The following is a 571-amino-acid chain: External alternative NAD(P)H-ubiquinone oxidoreductase B1, mitochondrial (571 aa).

The transit peptide at 1–35 (MTLLSSLGRASRSAPLASKLLLLGTLSGGSIVAYA) directs the protein to the mitochondrion. 51–81 (KVVVLGTGWAGISFLKDLDITSYDVQVVSPQ) contributes to the FAD binding site. 215–251 (LHFVIVGGGPTGVEFAAELHDFIIEDITKIYPSVKEL) is an NAD(+) binding site. Positions 372–407 (KILGDIANIFKAADADNSGTLTMEELEGVVDDIIVR) constitute an EF-hand domain. Ca(2+) contacts are provided by Asp385, Asp387, Ser389, Thr391, and Glu396. Residues 562 to 571 (YIFGRDSSRI) carry the Microbody targeting signal motif.

Belongs to the NADH dehydrogenase family. Requires FAD as cofactor. Expressed in seedlings, roots, cotyledons, leaves, stems, buds and flowers.

It is found in the mitochondrion inner membrane. It localises to the peroxisome. The enzyme catalyses a quinone + NADH + H(+) = a quinol + NAD(+). The catalysed reaction is a ubiquinone + NADH + H(+) = a ubiquinol + NAD(+). With respect to regulation, activity is calcium-dependent with a more pronounced effect at higher pH. In terms of biological role, alternative NADH-ubiquinone oxidoreductase which catalyzes the oxidation of mitochondrial NADH does not translocate protons across the inner mitochondrial membrane. Calcium-dependent NAD(P)H dehydrogenase. Binds calcium ions. This chain is External alternative NAD(P)H-ubiquinone oxidoreductase B1, mitochondrial (NDB1), found in Arabidopsis thaliana (Mouse-ear cress).